Here is a 137-residue protein sequence, read N- to C-terminus: Basic phospholipase A2 homolog 2 (137 aa).

Residues 1-16 (MRTLWIMAVLLVGVEG) form the signal peptide. 7 cysteine pairs are disulfide-bonded: C42–C131, C44–C60, C59–C111, C65–C137, C66–C104, C73–C97, and C91–C102. The interval 121–133 (KKYRYYLKPLCKK) is important for membrane-damaging activities in eukaryotes and bacteria; heparin-binding.

It belongs to the phospholipase A2 family. Group II subfamily. K49 sub-subfamily. In terms of assembly, homodimer; non-covalently linked. Binds to heparin. In terms of processing, it binds long-chain fatty acids covalently by a rapid, spontaneous, and autocatalytic process. When acylated, it binds to the surface of liposomes and isolated muscle membranes, with the fatty acid moiety inserted into the lipid bilayer and possibly acting as an anchor. In terms of tissue distribution, expressed by the venom gland.

Its subcellular location is the secreted. Its activity is regulated as follows. Heparin inhibits the myotoxic activity. Suramin inhibits the myotoxic activity. High level of membrane cholesterol content reduces cytolytic activity, whereas low level of membrane cholesterol content increases cytolytic activity. In terms of biological role, snake venom phospholipase A2 homolog that lacks enzymatic activity. Is myotoxic and induces a dose-dependent edema in the mouse foot pad. Also exhibits strong anticoagulant effects by binding to factor Xa (F10) and inhibiting the prothrombinase activity (IC(50) is 3 nM). In addition, it shows cytotoxic activity to a variety of cell types and bactericidal activity to a variety of Gram-negative and Gram-positive bacteria. Also induces a very rapid release of large amounts of potassium ions and ATP from muscle cells, which accounts for the pain reaction characteristic of viperid envenomations. The released ATP amplifies the effect of the myotoxins, acting as a 'danger signal', which spreads and causes further damage by acting on purinergic receptors. A model of myotoxic mechanism has been proposed: an apo Lys49-PLA2 is activated by the entrance of a hydrophobic molecule (e.g. fatty acid) at the hydrophobic channel of the protein leading to a reorientation of a monomer. This reorientation causes a transition between 'inactive' to 'active' states, causing alignment of C-terminal and membrane-docking sites (MDoS) side-by-side and putting the membrane-disruption sites (MDiS) in the same plane, exposed to solvent and in a symmetric position for both monomers. The MDoS region stabilizes the toxin on membrane by the interaction of charged residues with phospholipid head groups. Subsequently, the MDiS region destabilizes the membrane with penetration of hydrophobic residues. This insertion causes a disorganization of the membrane, allowing an uncontrolled influx of ions (i.e. calcium and sodium), and eventually triggering irreversible intracellular alterations and cell death. The protein is Basic phospholipase A2 homolog 2 of Bothrops asper (Terciopelo).